The primary structure comprises 194 residues: Protein GrpE (194 aa).

Composition is skewed to basic and acidic residues over residues 1-19 (MSKEEFPSEKNLDKEENTS) and 26-44 (KKEAAKGEETKKNNENQKL). The interval 1–44 (MSKEEFPSEKNLDKEENTSKPKKAVKKEAAKGEETKKNNENQKL) is disordered.

The protein belongs to the GrpE family. In terms of assembly, homodimer.

The protein localises to the cytoplasm. Its function is as follows. Participates actively in the response to hyperosmotic and heat shock by preventing the aggregation of stress-denatured proteins, in association with DnaK and GrpE. It is the nucleotide exchange factor for DnaK and may function as a thermosensor. Unfolded proteins bind initially to DnaJ; upon interaction with the DnaJ-bound protein, DnaK hydrolyzes its bound ATP, resulting in the formation of a stable complex. GrpE releases ADP from DnaK; ATP binding to DnaK triggers the release of the substrate protein, thus completing the reaction cycle. Several rounds of ATP-dependent interactions between DnaJ, DnaK and GrpE are required for fully efficient folding. The polypeptide is Protein GrpE (Lactobacillus acidophilus (strain ATCC 700396 / NCK56 / N2 / NCFM)).